We begin with the raw amino-acid sequence, 360 residues long: Phenylalanine--tRNA ligase alpha subunit (360 aa).

Residue E260 participates in Mg(2+) binding.

This sequence belongs to the class-II aminoacyl-tRNA synthetase family. Phe-tRNA synthetase alpha subunit type 1 subfamily. As to quaternary structure, tetramer of two alpha and two beta subunits. Requires Mg(2+) as cofactor.

Its subcellular location is the cytoplasm. The catalysed reaction is tRNA(Phe) + L-phenylalanine + ATP = L-phenylalanyl-tRNA(Phe) + AMP + diphosphate + H(+). This chain is Phenylalanine--tRNA ligase alpha subunit, found in Bradyrhizobium sp. (strain BTAi1 / ATCC BAA-1182).